Reading from the N-terminus, the 378-residue chain is Chaperone protein DnaJ (378 aa).

Positions D5–G70 constitute a J domain. The CR-type zinc finger occupies G134–T212. Residues C147, C150, C164, C167, C186, C189, C200, and C203 each coordinate Zn(2+). CXXCXGXG motif repeat units lie at residues C147 to G154, C164 to G171, C186 to G193, and C200 to G207.

It belongs to the DnaJ family. As to quaternary structure, homodimer. It depends on Zn(2+) as a cofactor.

The protein localises to the cytoplasm. In terms of biological role, participates actively in the response to hyperosmotic and heat shock by preventing the aggregation of stress-denatured proteins and by disaggregating proteins, also in an autonomous, DnaK-independent fashion. Unfolded proteins bind initially to DnaJ; upon interaction with the DnaJ-bound protein, DnaK hydrolyzes its bound ATP, resulting in the formation of a stable complex. GrpE releases ADP from DnaK; ATP binding to DnaK triggers the release of the substrate protein, thus completing the reaction cycle. Several rounds of ATP-dependent interactions between DnaJ, DnaK and GrpE are required for fully efficient folding. Also involved, together with DnaK and GrpE, in the DNA replication of plasmids through activation of initiation proteins. In Colwellia psychrerythraea (strain 34H / ATCC BAA-681) (Vibrio psychroerythus), this protein is Chaperone protein DnaJ.